The primary structure comprises 572 residues: Adenine deaminase (572 aa).

It belongs to the metallo-dependent hydrolases superfamily. Adenine deaminase family. Mn(2+) serves as cofactor.

It carries out the reaction adenine + H2O + H(+) = hypoxanthine + NH4(+). This chain is Adenine deaminase, found in Clostridium perfringens (strain 13 / Type A).